Here is a 465-residue protein sequence, read N- to C-terminus: Lactaldehyde dehydrogenase (465 aa).

220 to 225 (GSVEIG) is an NAD(+) binding site. Active-site residues include E240 and C274.

Belongs to the aldehyde dehydrogenase family. Homotetramer.

It catalyses the reaction (S)-lactaldehyde + NAD(+) + H2O = (S)-lactate + NADH + 2 H(+). The protein operates within cofactor biosynthesis; coenzyme F420 biosynthesis. In terms of biological role, involved in F420 biosynthesis through the oxidation of lactaldehyde to lactate. The chain is Lactaldehyde dehydrogenase from Methanococcus maripaludis (strain C7 / ATCC BAA-1331).